Here is a 316-residue protein sequence, read N- to C-terminus: Apolipoprotein E (316 aa).

Positions 1–18 (MKALWAVLVVTLLAGCLA) are cleaved as a signal peptide. 8 tandem repeats follow at residues 76 to 97 (VLMEDTMTELKAYKKELEEQMG), 98 to 119 (PMAEETRARLAKEVQAAQSRLG), 120 to 141 (ADMEDLRNRLGLYRNEVQTMLG), 142 to 163 (QSTEELRARLTTHLRKLRKRLM), 164 to 185 (RDAEDLQKRLAVYKAGAREGAE), 186 to 207 (RGVGAIRERLGPLVEQGRQRTA), 208 to 229 (NLGAGAAQPLRERAQALGARIR), and 230 to 251 (GRLEEVGNQARDRLEEVREQME). The 8 X 22 AA approximate tandem repeats stretch occupies residues 76 to 251 (VLMEDTMTEL…RLEEVREQME (176 aa)). A Methionine sulfoxide modification is found at M139. A Phosphoserine modification is found at S143. Residues 154-164 (HLRKLRKRLMR) are LDL and other lipoprotein receptors binding. 158–161 (LRKR) is a heparin binding site. The lipid-binding and lipoprotein association stretch occupies residues 206–286 (TANLGAGAAQ…GWFEPLVEDM (81 aa)). 225-232 (GARIRGRL) is a heparin binding site. A homooligomerization region spans residues 262–316 (QQMRLQAEIFQTRLKGWFEPLVEDMQRQWANLMEKIQASVATNPIPPSSVPQESQ). Positions 274–286 (RLKGWFEPLVEDM) are specificity for association with VLDL.

Belongs to the apolipoprotein A1/A4/E family. Homotetramer. May interact with ABCA1; functionally associated with ABCA1 in the biogenesis of HDLs. May interact with APP/A4 amyloid-beta peptide; the interaction is extremely stable in vitro but its physiological significance is unclear. May interact with MAPT. May interact with MAP2. In the cerebrospinal fluid, interacts with secreted SORL1. Interacts with PMEL; this allows the loading of PMEL luminal fragment on ILVs to induce fibril nucleation. In terms of processing, APOE exists as multiple glycosylated and sialylated glycoforms within cells and in plasma. The extent of glycosylation and sialylation are tissue and context specific. Post-translationally, glycated in plasma VLDL. Phosphorylated by FAM20C in the extracellular medium.

The protein localises to the secreted. Its subcellular location is the extracellular space. The protein resides in the extracellular matrix. It is found in the extracellular vesicle. It localises to the endosome. The protein localises to the multivesicular body. In terms of biological role, APOE is an apolipoprotein, a protein associating with lipid particles, that mainly functions in lipoprotein-mediated lipid transport between organs via the plasma and interstitial fluids. APOE is a core component of plasma lipoproteins and is involved in their production, conversion and clearance. Apolipoproteins are amphipathic molecules that interact both with lipids of the lipoprotein particle core and the aqueous environment of the plasma. As such, APOE associates with chylomicrons, chylomicron remnants, very low density lipoproteins (VLDL) and intermediate density lipoproteins (IDL) but shows a preferential binding to high-density lipoproteins (HDL). It also binds a wide range of cellular receptors including the LDL receptor/LDLR, the LDL receptor-related proteins LRP1, LRP2 and LRP8 and the very low-density lipoprotein receptor/VLDLR that mediate the cellular uptake of the APOE-containing lipoprotein particles. Finally, APOE also has a heparin-binding activity and binds heparan-sulfate proteoglycans on the surface of cells, a property that supports the capture and the receptor-mediated uptake of APOE-containing lipoproteins by cells. A main function of APOE is to mediate lipoprotein clearance through the uptake of chylomicrons, VLDLs, and HDLs by hepatocytes. APOE is also involved in the biosynthesis by the liver of VLDLs as well as their uptake by peripheral tissues ensuring the delivery of triglycerides and energy storage in muscle, heart and adipose tissues. By participating in the lipoprotein-mediated distribution of lipids among tissues, APOE plays a critical role in plasma and tissues lipid homeostasis. APOE is also involved in two steps of reverse cholesterol transport, the HDLs-mediated transport of cholesterol from peripheral tissues to the liver, and thereby plays an important role in cholesterol homeostasis. First, it is functionally associated with ABCA1 in the biogenesis of HDLs in tissues. Second, it is enriched in circulating HDLs and mediates their uptake by hepatocytes. APOE also plays an important role in lipid transport in the central nervous system, regulating neuron survival and sprouting. This is Apolipoprotein E (APOE) from Microtus ochrogaster (Prairie vole).